A 329-amino-acid polypeptide reads, in one-letter code: Serpentine receptor class alpha-8 (329 aa).

6 helical membrane-spanning segments follow: residues 26–46, 60–80, 141–161, 187–207, 231–251, and 273–293; these read VDLITSFFTYMLSIIAIKMVL, FLNIFYANLYQIVYSIDVVVI, IFVGSFIAIVVMISTTSTGKL, TIHFYISTVVSLFNLAASVAL, VIESTETICFLNFTQFVFMFI, and FWVVWCYTVPFIALTFPLLLI.

The protein belongs to the nematode receptor-like protein sra family.

The protein localises to the membrane. The protein is Serpentine receptor class alpha-8 (sra-8) of Caenorhabditis elegans.